Reading from the N-terminus, the 190-residue chain is Holliday junction branch migration complex subunit RuvA (190 aa).

Positions 1-65 (MIGNLRGIVD…ENVTQLYGFI (65 aa)) are domain I. The domain II stretch occupies residues 66–143 (SKEEQQCLRL…KLEINNNHFH (78 aa)). Residues 144-147 (SISE) form a flexible linker region. Residues 147–190 (EDALSALINLGYERTKAYDTIKKIEDESPNLDTKDIIRMALKTI) are domain III.

This sequence belongs to the RuvA family. As to quaternary structure, homotetramer. Forms an RuvA(8)-RuvB(12)-Holliday junction (HJ) complex. HJ DNA is sandwiched between 2 RuvA tetramers; dsDNA enters through RuvA and exits via RuvB. An RuvB hexamer assembles on each DNA strand where it exits the tetramer. Each RuvB hexamer is contacted by two RuvA subunits (via domain III) on 2 adjacent RuvB subunits; this complex drives branch migration. In the full resolvosome a probable DNA-RuvA(4)-RuvB(12)-RuvC(2) complex forms which resolves the HJ.

The protein resides in the cytoplasm. The RuvA-RuvB-RuvC complex processes Holliday junction (HJ) DNA during genetic recombination and DNA repair, while the RuvA-RuvB complex plays an important role in the rescue of blocked DNA replication forks via replication fork reversal (RFR). RuvA specifically binds to HJ cruciform DNA, conferring on it an open structure. The RuvB hexamer acts as an ATP-dependent pump, pulling dsDNA into and through the RuvAB complex. HJ branch migration allows RuvC to scan DNA until it finds its consensus sequence, where it cleaves and resolves the cruciform DNA. In Wolbachia pipientis subsp. Culex pipiens (strain wPip), this protein is Holliday junction branch migration complex subunit RuvA.